The primary structure comprises 328 residues: Phosphatidylglycerol--prolipoprotein diacylglyceryl transferase (328 aa).

Transmembrane regions (helical) follow at residues V15–S35, I57–V77, and G106–T126. Residue R156 coordinates a 1,2-diacyl-sn-glycero-3-phospho-(1'-sn-glycerol). The next 2 membrane-spanning stretches (helical) occupy residues G242–L262 and I289–V309.

This sequence belongs to the Lgt family.

It localises to the cell inner membrane. It catalyses the reaction L-cysteinyl-[prolipoprotein] + a 1,2-diacyl-sn-glycero-3-phospho-(1'-sn-glycerol) = an S-1,2-diacyl-sn-glyceryl-L-cysteinyl-[prolipoprotein] + sn-glycerol 1-phosphate + H(+). The protein operates within protein modification; lipoprotein biosynthesis (diacylglyceryl transfer). Its function is as follows. Catalyzes the transfer of the diacylglyceryl group from phosphatidylglycerol to the sulfhydryl group of the N-terminal cysteine of a prolipoprotein, the first step in the formation of mature lipoproteins. This chain is Phosphatidylglycerol--prolipoprotein diacylglyceryl transferase, found in Borreliella burgdorferi (strain ATCC 35210 / DSM 4680 / CIP 102532 / B31) (Borrelia burgdorferi).